A 340-amino-acid chain; its full sequence is HTH-type transcriptional regulator PtxS (340 aa).

The 56-residue stretch at 12-67 (VTINQVAEAAGVSKASVSRYIGGDRQLLADATARRIERAIDQLDYRPNQMARGLKR) folds into the HTH lacI-type domain. A DNA-binding region (H-T-H motif) is located at residues 14 to 33 (INQVAEAAGVSKASVSRYIG).

Interacts with PtxR in the absence of 2-ketogluconate. Binding of the 2-ketogluconate effector to PtxS causes PtxS/PtxR complex dissociation.

Its activity is regulated as follows. 2-ketogluconate acts as a molecular effector and causes dissociation of the PtxS/PtxR complex. Negatively regulates glucose metabolism by binding directly to the promoter region of the kgu and gad operons. It also negatively regulates its own synthesis. Functionally, in addition, in pathogenic strains, PtxS modulates PtxR activity in response to 2-ketogluconate. In the presence of PtxR, which also binds to the kgu and gad promoter regions, PtxS and PtxR form a tight complex, creating a DNA-loop that prevents RNA polymerase promoter access and expression of the glucose metabolism genes. Binding of the 2-ketogluconate effector to PtxS causes PtxS/PtxR complex dissociation and leads to the dissolution of the repression DNA-loop, facilitating the entry of the RNA polymerase and enabling the transcription of the genes. Also plays an important role in the regulation of the expression of the virulence factor exotoxin A (toxA). PtxS does not bind directly to the toxA promoter but negatively regulates the production of exotoxin A by binding to PtxR and interfering with its positive regulator activity. In the presence of 2-ketogluconate, PtxS is released and PtxR can recruit RNA polymerase. This is HTH-type transcriptional regulator PtxS from Pseudomonas aeruginosa (strain ATCC 15692 / DSM 22644 / CIP 104116 / JCM 14847 / LMG 12228 / 1C / PRS 101 / PAO1).